We begin with the raw amino-acid sequence, 189 residues long: Elongation factor P (189 aa).

The residue at position 34 (lysine 34) is an N6-(3,6-diaminohexanoyl)-5-hydroxylysine.

The protein belongs to the elongation factor P family. In terms of processing, may be beta-lysylated on the epsilon-amino group of Lys-34 by the combined action of EpmA and EpmB, and then hydroxylated on the C5 position of the same residue by EpmC (if this protein is present). Lysylation is critical for the stimulatory effect of EF-P on peptide-bond formation. The lysylation moiety may extend toward the peptidyltransferase center and stabilize the terminal 3-CCA end of the tRNA. Hydroxylation of the C5 position on Lys-34 may allow additional potential stabilizing hydrogen-bond interactions with the P-tRNA.

It localises to the cytoplasm. It participates in protein biosynthesis; polypeptide chain elongation. Involved in peptide bond synthesis. Alleviates ribosome stalling that occurs when 3 or more consecutive Pro residues or the sequence PPG is present in a protein, possibly by augmenting the peptidyl transferase activity of the ribosome. Modification of Lys-34 is required for alleviation. The chain is Elongation factor P from Saccharophagus degradans (strain 2-40 / ATCC 43961 / DSM 17024).